A 1090-amino-acid polypeptide reads, in one-letter code: MATLLSHPQQRPPFLRQAIKIRRRRVRDLQDPPPQMAPEIQPPSHHFSPEQRALLYEDALYTVLHRLGHPEPNHVTEASELLRYLQEAFHVEPEEHQQTLQRVRELEKPIFCLKATVKQAKGILGKDVSGFSDPYCLLGIEQGVGVPGGSPGSRHRQKAVVRHTIPEEETHRTQVITQTLNPVWDETFILEFEDITNASFHLDMWDLDTVESVRQKLGELTDLHGLRRIFKEARKDKGQDDFLGNVVLRLQDLRCREDQWYPLEPRTETYPDRGQCHLQFQLIHKRRATSASRSQPSYTVHLHLLQQLVSHEVTQHEAGSTSWDGSLSPQAATVLFLHATQKDLSDFHQSMAQWLAYSRLYQSLEFPSSCLLHPITSIEYQWIQGRLKAEQQEELAASFSSLLTYGLSLIRRFRSVFPLSVSDSPARLQSLLRVLVQMCKMKAFGELCPNTAPLPQLVTEALQTGTTEWFHLKQQHHQPMVQGIPEAGKALLGLVQDVIGDLHQCQRTWDKIFHNTLKIHLFSMAFRELQWLVAKRVQDHTTVVGDVVSPEMGESLFQLYISLKELCQLRMSSSERDGVLALDNFHRWFQPAIPSWLQKTYNEALARVQRAVQMDELVPLGELTKHSTSAVDLSTCFAQISHTARQLDWPDPEEAFMITVKFVEDTCRLALVYCSLIKARARELSSGQKDQGQAANMLCVVVNDMEQLRLVIGKLPAQLAWEALEQRVGAVLEQGQLQNTLHAQLQSALAGLGHEIRTGVRTLAEQLEVGIAKHIQKLVGVRESVLPEDAILPLMKFLEVELCYMNTNLVQENFSSLLTLLWTHTLTVLVEAAASQRSSSLASNRLKIALQNLEICFHAEGCGLPPKALHTATFQALQRDLELQAASSRELIRKYFCSRIQQQAETTSEELGAVTVKASYRASEQKLRVELLSASSLLPLDSNGSSDPFVQLTLEPRHEFPELAARETQKHKKDLHPLFDETFEFLVPAEPCRKAGACLLLTVLDYDTLGADDLEGEAFLPLREVPGLSGSEEPGEVPQTRLPLTYPAPNGDPILQLLEGRKGDREAQVFVRLRRHRAKQASQHALRPAP.

Residues 92 to 239 (EPEEHQQTLQ…FKEARKDKGQ (148 aa)) form the C2 1 domain. 2 residues coordinate Ca(2+): Asp127 and Asp133. Phosphoserine is present on Ser150. Ca(2+) is bound by residues Asp206 and Asp208. The interaction with RAB27A stretch occupies residues 240–543 (DDFLGNVVLR…AKRVQDHTTV (304 aa)). The MHD1 domain occupies 557-677 (FQLYISLKEL…RLALVYCSLI (121 aa)). The region spanning 788–895 (EDAILPLMKF…ASSRELIRKY (108 aa)) is the MHD2 domain. One can recognise a C2 2 domain in the interval 910–1035 (ELGAVTVKAS…PGLSGSEEPG (126 aa)). Ca(2+)-binding residues include Leu940, Asp941, Asp947, Asp1005, Asp1007, and Asp1013. Residues 1026–1048 (PGLSGSEEPGEVPQTRLPLTYPA) form a disordered region.

The protein belongs to the unc-13 family. In terms of assembly, interacts with DOC2A. Interacts with RAB27A. Interacts with RHOG; the interaction increases RhoG affinity to the membrane lipids, targets UNC13D to membrane lipids and facilitates cytotoxic granule (CG) docking to the plasma membrane. Ca(2+) is required as a cofactor. As to expression, expressed at high levels in spleen, thymus and leukocytes. Also expressed in lung and placenta, and at very low levels in brain, heart, skeletal muscle and kidney. Expressed in cytotoxic T-lymphocytes (CTL) and mast cells.

It localises to the cytoplasm. The protein localises to the membrane. It is found in the late endosome. Its subcellular location is the recycling endosome. The protein resides in the lysosome. Functionally, plays a role in cytotoxic granule exocytosis in lymphocytes. Required for both granule maturation and granule docking and priming at the immunologic synapse. Regulates assembly of recycling and late endosomal structures, leading to the formation of an endosomal exocytic compartment that fuses with perforin-containing granules at the immunologic synapse and licences them for exocytosis. Regulates Ca(2+)-dependent secretory lysosome exocytosis in mast cells. The polypeptide is Protein unc-13 homolog D (UNC13D) (Homo sapiens (Human)).